The sequence spans 21 residues: Peptide PGLa-R4 (21 aa).

Leucine amide is present on leucine 21.

As to expression, expressed by the skin glands.

The protein localises to the secreted. In terms of biological role, antimicrobial peptide. The chain is Peptide PGLa-R4 from Xenopus ruwenzoriensis (Uganda clawed frog).